A 329-amino-acid polypeptide reads, in one-letter code: Glycosyltransferase family protein 64 C3 (329 aa).

A signal peptide spans 1–27 (MGVKSVRFSIWFLFVVTDLVFCRTLSG). N-linked (GlcNAc...) asparagine glycosylation is present at asparagine 99. Substrate is bound by residues 118-123 (SSLNAR), 139-141 (DDD), arginine 169, 226-230 (RNCED), and 271-284 (VGLS…RKRR). Position 141 (aspartate 141) interacts with Mn(2+). A disulfide bridge connects residues cysteine 228 and cysteine 287. Aspartate 230 is a catalytic residue. The segment at 268–284 (VRDVGLSSRRVEHRKRR) is substrate binding.

The protein belongs to the glycosyltransferase 64 family. It depends on Mn(2+) as a cofactor.

The protein operates within protein modification; protein glycosylation. In terms of biological role, probable glycosyltransferase. This is Glycosyltransferase family protein 64 C3 from Arabidopsis thaliana (Mouse-ear cress).